The primary structure comprises 300 residues: Phosphoenolpyruvate phosphomutase (300 aa).

The propeptide occupies 1–10; that stretch reads MLANSLKSFF. Aspartate 66 functions as the Nucleophile in the catalytic mechanism.

Belongs to the isocitrate lyase/PEP mutase superfamily. PEP mutase family.

The enzyme catalyses phosphoenolpyruvate + H(+) = 3-phosphonopyruvate. Its pathway is phosphorus metabolism; phosphonate biosynthesis. In terms of biological role, formation of a carbon-phosphorus bond by converting phosphoenolpyruvate (PEP) to phosphonopyruvate (P-Pyr). The polypeptide is Phosphoenolpyruvate phosphomutase (PEPM) (Tetrahymena pyriformis).